The sequence spans 350 residues: Methionine import ATP-binding protein MetN (350 aa).

The region spanning 9–245 (LKDVDVEFHG…PQQQLTKDFI (237 aa)) is the ABC transporter domain. 43–50 (GYSGAGKS) contributes to the ATP binding site.

The protein belongs to the ABC transporter superfamily. Methionine importer (TC 3.A.1.24) family. In terms of assembly, the complex is composed of two ATP-binding proteins (MetN), two transmembrane proteins (MetI) and a solute-binding protein (MetQ).

The protein resides in the cell membrane. It catalyses the reaction L-methionine(out) + ATP + H2O = L-methionine(in) + ADP + phosphate + H(+). The catalysed reaction is D-methionine(out) + ATP + H2O = D-methionine(in) + ADP + phosphate + H(+). Functionally, part of the ABC transporter complex MetNIQ involved in methionine import. Responsible for energy coupling to the transport system. The protein is Methionine import ATP-binding protein MetN of Lacticaseibacillus paracasei (strain ATCC 334 / BCRC 17002 / CCUG 31169 / CIP 107868 / KCTC 3260 / NRRL B-441) (Lactobacillus paracasei).